Here is a 449-residue protein sequence, read N- to C-terminus: Signal recognition particle protein (449 aa).

Residues 109-116 (GLQGSGKT), 191-195 (DTAGR), and 249-252 (SRID) contribute to the GTP site.

This sequence belongs to the GTP-binding SRP family. SRP54 subfamily. In terms of assembly, part of the signal recognition particle protein translocation system, which is composed of SRP and FtsY. SRP is a ribonucleoprotein composed of Ffh and a 4.5S RNA molecule.

It localises to the cytoplasm. It carries out the reaction GTP + H2O = GDP + phosphate + H(+). In terms of biological role, involved in targeting and insertion of nascent membrane proteins into the cytoplasmic membrane. Binds to the hydrophobic signal sequence of the ribosome-nascent chain (RNC) as it emerges from the ribosomes. The SRP-RNC complex is then targeted to the cytoplasmic membrane where it interacts with the SRP receptor FtsY. Interaction with FtsY leads to the transfer of the RNC complex to the Sec translocase for insertion into the membrane, the hydrolysis of GTP by both Ffh and FtsY, and the dissociation of the SRP-FtsY complex into the individual components. In Rickettsia conorii (strain ATCC VR-613 / Malish 7), this protein is Signal recognition particle protein.